The following is a 358-amino-acid chain: DNA ligase C (358 aa).

Catalysis depends on K29, which acts as the N6-AMP-lysine intermediate.

The protein belongs to the ATP-dependent DNA ligase family. It depends on a divalent metal cation as a cofactor.

It carries out the reaction ATP + (deoxyribonucleotide)n-3'-hydroxyl + 5'-phospho-(deoxyribonucleotide)m = (deoxyribonucleotide)n+m + AMP + diphosphate.. In terms of biological role, DNA ligase that seals nicks in double-stranded DNA during DNA replication, DNA recombination and DNA repair. This chain is DNA ligase C (ligC), found in Mycobacterium tuberculosis (strain ATCC 25618 / H37Rv).